The following is a 242-amino-acid chain: Floral homeotic protein AGAMOUS (242 aa).

The region spanning 19–73 (RGKIEIKRIENTTNRQVTFCKRRNGLLKKAYELSVLCDAEVALIVFSSRGRLYEY) is the MADS-box domain. The region spanning 103–193 (AQYYQQEASK…RAKIAETERS (91 aa)) is the K-box domain.

Expressed exclusively in stamens and carpels.

It is found in the nucleus. Functionally, probable transcription factor involved in regulating genes that determines stamen and carpel development in wild-type flowers. The protein is Floral homeotic protein AGAMOUS (AG1) of Petunia hybrida (Petunia).